Here is a 209-residue protein sequence, read N- to C-terminus: MSGKKRTASSSRWMQEHFDDHYVKLAQKRGFRSRAAFKIEEIQEKDKLIRPGMTVVDLGAAPGGWSQVAVKLAGDNGKVIACDILPMDPIVGVDFLQGDFREEKVLDALLTRVGDAKVDVVLSDMAPNMSGTGGVDQPRAMYLVELALDMCHQVLAPNGCFAVKVFQGEGFEEYMKSVREAFKTVKTRKPDSSRPRSREVYLVATGYKL.

S-adenosyl-L-methionine is bound by residues Gly63, Trp65, Asp83, Asp99, and Asp124. Lys164 (proton acceptor) is an active-site residue.

The protein belongs to the class I-like SAM-binding methyltransferase superfamily. RNA methyltransferase RlmE family.

It is found in the cytoplasm. It carries out the reaction uridine(2552) in 23S rRNA + S-adenosyl-L-methionine = 2'-O-methyluridine(2552) in 23S rRNA + S-adenosyl-L-homocysteine + H(+). In terms of biological role, specifically methylates the uridine in position 2552 of 23S rRNA at the 2'-O position of the ribose in the fully assembled 50S ribosomal subunit. This Shewanella woodyi (strain ATCC 51908 / MS32) protein is Ribosomal RNA large subunit methyltransferase E.